A 207-amino-acid polypeptide reads, in one-letter code: Uracil phosphoribosyltransferase (207 aa).

5-phospho-alpha-D-ribose 1-diphosphate is bound by residues Arg-77, Arg-102, and 129–137; that span reads DPMLATGGS. Residues Ile-192 and 197-199 each bind uracil; that span reads GDA. Asp-198 contacts 5-phospho-alpha-D-ribose 1-diphosphate.

It belongs to the UPRTase family. It depends on Mg(2+) as a cofactor.

It catalyses the reaction UMP + diphosphate = 5-phospho-alpha-D-ribose 1-diphosphate + uracil. It functions in the pathway pyrimidine metabolism; UMP biosynthesis via salvage pathway; UMP from uracil: step 1/1. Allosterically activated by GTP. Functionally, catalyzes the conversion of uracil and 5-phospho-alpha-D-ribose 1-diphosphate (PRPP) to UMP and diphosphate. This chain is Uracil phosphoribosyltransferase, found in Mycoplasma mobile (strain ATCC 43663 / 163K / NCTC 11711) (Mesomycoplasma mobile).